A 126-amino-acid polypeptide reads, in one-letter code: S-adenosylmethionine decarboxylase proenzyme (126 aa).

Serine 63 functions as the Schiff-base intermediate with substrate; via pyruvic acid in the catalytic mechanism. Serine 63 carries the post-translational modification Pyruvic acid (Ser); by autocatalysis. Histidine 68 (proton acceptor; for processing activity) is an active-site residue. The active-site Proton donor; for catalytic activity is cysteine 83.

This sequence belongs to the prokaryotic AdoMetDC family. Type 1 subfamily. As to quaternary structure, heterotetramer of two alpha and two beta chains arranged as a dimer of alpha/beta heterodimers. It depends on pyruvate as a cofactor. Is synthesized initially as an inactive proenzyme. Formation of the active enzyme involves a self-maturation process in which the active site pyruvoyl group is generated from an internal serine residue via an autocatalytic post-translational modification. Two non-identical subunits are generated from the proenzyme in this reaction, and the pyruvate is formed at the N-terminus of the alpha chain, which is derived from the carboxyl end of the proenzyme. The post-translation cleavage follows an unusual pathway, termed non-hydrolytic serinolysis, in which the side chain hydroxyl group of the serine supplies its oxygen atom to form the C-terminus of the beta chain, while the remainder of the serine residue undergoes an oxidative deamination to produce ammonia and the pyruvoyl group blocking the N-terminus of the alpha chain.

It catalyses the reaction S-adenosyl-L-methionine + H(+) = S-adenosyl 3-(methylsulfanyl)propylamine + CO2. It functions in the pathway amine and polyamine biosynthesis; S-adenosylmethioninamine biosynthesis; S-adenosylmethioninamine from S-adenosyl-L-methionine: step 1/1. Catalyzes the decarboxylation of S-adenosylmethionine to S-adenosylmethioninamine (dcAdoMet), the propylamine donor required for the synthesis of the polyamines spermine and spermidine from the diamine putrescine. The chain is S-adenosylmethionine decarboxylase proenzyme from Clostridium tetani (strain Massachusetts / E88).